A 373-amino-acid chain; its full sequence is Ferroptosis suppressor protein 1 (373 aa).

Residue G2 is the site of N-myristoyl glycine attachment. The helical transmembrane segment at V7 to A27 threads the bilayer. 6-hydroxy-FAD is bound by residues G18–G22, R54, and V82. Position 168 is an N6-acetyllysine; by KAT2B (K168). D285 is a 6-hydroxy-FAD binding site.

Belongs to the FAD-dependent oxidoreductase family. In terms of assembly, interacts with importin subunits KPNA2 and IPO5; this interaction likely mediates the translocation into the nucleus upon oxidative stress. The cofactor is 6-hydroxy-FAD. Post-translationally, N-myristoylation at Gly-2 mediates the recruitment to lipid droplets and plasma membrane, enabling its anti-lipid peroxidation activity. In terms of processing, acetylation at Lys-168 prevents AIFM2 ubiquitination and degradation, thereby inhibiting ferroptosis. KAT2B mediates acetylation at Lys-168, while HDAC3 removes it. Ubiquitinated. AIFM2 undergoes 'Lys-29'-ubiquitination and proteasomal degradation, which is inhibited by acetylation at Lys-168. Detected in most normal tissues as two transcripts of 1.8 and 4.0 kb in length, respectively. Highly expressed in heart, moderately in liver and skeletal muscles, and expressed at low levels in placenta, lung, kidney, and pancreas. Both transcripts expressed following p53/TP53 induction. The shorter 1.8 kb transcript seems to be the major transcript in EB1 colon cancer cells.

The protein localises to the lipid droplet. Its subcellular location is the cell membrane. The protein resides in the cytoplasm. It is found in the mitochondrion membrane. It localises to the nucleus. It catalyses the reaction ubiquinone-10 + NADH + H(+) = ubiquinol-10 + NAD(+). The catalysed reaction is phylloquinone + NADH + H(+) = phylloquinol + NAD(+). The enzyme catalyses menaquinone-4 + NADH + H(+) = menaquinol-4 + NAD(+). It carries out the reaction menadione + NADH + H(+) = menadiol + NAD(+). The modification by 4-hydroxy-2-nonenal (HNE) adduction in mitochondria results in loss of the oxidoreductase activity and activation of a novel function in mitochondrial oxidative stress signaling. Its function is as follows. An NAD(P)H-dependent oxidoreductase that acts as a key inhibitor of ferroptosis. At the plasma membrane, catalyzes reduction of coenzyme Q/ubiquinone-10 to ubiquinol-10, a lipophilic radical-trapping antioxidant that prevents lipid oxidative damage and consequently ferroptosis. Acts in parallel to GPX4 to suppress phospholipid peroxidation and ferroptosis. This anti-ferroptotic function is independent of cellular glutathione levels. Also acts as a potent radical-trapping antioxidant by mediating warfarin-resistant vitamin K reduction in the canonical vitamin K cycle: catalyzes NAD(P)H-dependent reduction of vitamin K (phylloquinone, menaquinone-4 and menadione) to hydroquinone forms. Hydroquinones act as potent radical-trapping antioxidants inhibitor of phospholipid peroxidation and ferroptosis. May play a role in mitochondrial stress signaling. Upon oxidative stress, associates with the lipid peroxidation end product 4-hydroxy-2-nonenal (HNE) forming a lipid adduct devoid of oxidoreductase activity, which then translocates from mitochondria into the nucleus triggering DNA damage and cell death. Capable of DNA binding in a non-sequence specific way. The chain is Ferroptosis suppressor protein 1 from Homo sapiens (Human).